An 86-amino-acid chain; its full sequence is Molybdopterin synthase sulfur carrier subunit (86 aa).

Gly86 bears the 1-thioglycine; alternate mark. Residue Gly86 is modified to Glycyl adenylate; alternate.

The protein belongs to the MoaD family. MOCS2A subfamily. In terms of assembly, heterotetramer; composed of 2 small (mocs2s) and 2 large (mocs2l) subunits. In terms of processing, C-terminal thiocarboxylation occurs in 2 steps, it is first acyl-adenylated (-COAMP) via the hesA/moeB/thiF part of mocs3, then thiocarboxylated (-COSH) via the rhodanese domain of mocs3.

It is found in the cytoplasm. It participates in cofactor biosynthesis; molybdopterin biosynthesis. Acts as a sulfur carrier required for molybdopterin biosynthesis. Component of the molybdopterin synthase complex that catalyzes the conversion of precursor Z into molybdopterin by mediating the incorporation of 2 sulfur atoms into precursor Z to generate a dithiolene group. In the complex, serves as sulfur donor by being thiocarboxylated (-COSH) at its C-terminus by mocs3. After interaction with mocs2l, the sulfur is then transferred to precursor Z to form molybdopterin. The protein is Molybdopterin synthase sulfur carrier subunit (mocs2s) of Dictyostelium discoideum (Social amoeba).